The primary structure comprises 283 residues: MAITAAQVKELRDRTGAGMMDCKNALTETNGDMELAIDNMRKSGAAKAAKKAGNIAADGTILIKNGEGFAALLEVNCQTDFVAKDSNFLAFANAVLDAAAASKVTLEDLKAQFEDARVALVTKIGENINIRRVEYIDGANLSSYRHGERIGVVVAGEADEETLKHIAMHVAASKPEYVNPEDVPAEIVAREQALQIEMSMNEGKSAEIAEKMVLGRMKKFTGEISLTGQAYIMEPKKTVGEILKEKGAKVTNFIRLEVGEGIEKKEEDFAAEVAAQIAASKKA.

Residues 79-82 form an involved in Mg(2+) ion dislocation from EF-Tu region; that stretch reads TDFV.

The protein belongs to the EF-Ts family.

It is found in the cytoplasm. In terms of biological role, associates with the EF-Tu.GDP complex and induces the exchange of GDP to GTP. It remains bound to the aminoacyl-tRNA.EF-Tu.GTP complex up to the GTP hydrolysis stage on the ribosome. This chain is Elongation factor Ts, found in Shewanella baltica (strain OS155 / ATCC BAA-1091).